A 123-amino-acid chain; its full sequence is Ribonuclease P protein component 1 (123 aa).

Positions 73-93 are disordered; that stretch reads PDNGVGTAFKPAGGETRQTTG.

This sequence belongs to the eukaryotic/archaeal RNase P protein component 1 family. In terms of assembly, consists of a catalytic RNA component and at least 4-5 protein subunits.

The protein resides in the cytoplasm. It carries out the reaction Endonucleolytic cleavage of RNA, removing 5'-extranucleotides from tRNA precursor.. Functionally, part of ribonuclease P, a protein complex that generates mature tRNA molecules by cleaving their 5'-ends. This Halobacterium salinarum (strain ATCC 29341 / DSM 671 / R1) protein is Ribonuclease P protein component 1.